The chain runs to 1553 residues: Sodium channel protein PaFPC1 (1553 aa).

A disordered region spans residues 1 to 68; that stretch reads MADNSPLIRE…SAHPDQALEQ (68 aa). Residues 1-140 lie on the Cytoplasmic side of the membrane; that stretch reads MADNSPLIRE…RVAISTMVQP (140 aa). Residues 34–60 are compositionally biased toward basic and acidic residues; the sequence is ENGKTEENKDNSRDKGRGANKDRDGSA. Residues 141–159 traverse the membrane as a helical segment; the sequence is IFSYFIMITILIHCIFMIM. Over 160 to 165 the chain is Extracellular; sequence PATQTT. The helical transmembrane segment at 166–186 threads the bilayer; that stretch reads YILELVFLSIYTIEVVVKVLA. Topologically, residues 187–200 are cytoplasmic; sequence RGFILHPFAYLRDP. A helical membrane pass occupies residues 201–218; sequence WNWLDFLVTLIGYITLVV. The Extracellular segment spans residues 219 to 224; sequence DLGHLY. Residues 225-241 traverse the membrane as a helical segment; sequence ALRAFRVLRSWRTVTIV. Topologically, residues 242–260 are cytoplasmic; it reads PGWRTIVDALSLSITSLKD. A helical transmembrane segment spans residues 261 to 280; sequence LVLLLLFSLFVFAVLGLQIY. Residues 281–360 lie on the Extracellular side of the membrane; it reads MGVLTQKCVK…PNYGYTSFDT (80 aa). 2 disulfides stabilise this stretch: Cys-288/Cys-337 and Cys-328/Cys-343. 4 N-linked (GlcNAc...) asparagine glycosylation sites follow: Asn-300, Asn-308, Asn-312, and Asn-330. The segment at residues 361-385 is an intramembrane region (pore-forming); the sequence is FGWAFLSVFRLVTLDYWEDLYQLAL. Residue Glu-378 coordinates saxitoxin. The Extracellular segment spans residues 386 to 392; the sequence is RSAGPWH. Residues 393-413 form a helical membrane-spanning segment; sequence ILFFIIVVFYGTFCFLNFILA. The Cytoplasmic segment spans residues 414 to 519; that stretch reads VVVMSYTHMV…GAIGAVVLSP (106 aa). A helical transmembrane segment spans residues 520–538; the sequence is FFELFIAVIIVLNITFMAL. Residues 539-549 lie on the Extracellular side of the membrane; the sequence is DHHDMNIEFER. A helical membrane pass occupies residues 550-569; the sequence is ILRTGNYIFTSIYIVEAVLK. Residues 570 to 583 are Cytoplasmic-facing; that stretch reads IIALSPKFYFKDSW. The helical transmembrane segment at 584–603 threads the bilayer; it reads NVFDFIIVVFAILELGLEGV. The Extracellular segment spans residues 604–605; it reads QG. The helical transmembrane segment at 606-623 threads the bilayer; it reads LSVFRSFRLLRVFRLAKF. Topologically, residues 624–639 are cytoplasmic; it reads WPTLNNFMSVMTKSYG. A helical membrane pass occupies residues 640–658; the sequence is AFVNVMYVMFLLLFIFAII. The Extracellular segment spans residues 659 to 686; the sequence is GMQLFGMNYIDNMERFPDGDLPRWNFTD. Residue Asn-683 is glycosylated (N-linked (GlcNAc...) asparagine). Residues 687 to 707 constitute an intramembrane region (pore-forming); the sequence is FLHSFMIVFRALCGEWIESMW. Positions 701 and 704 each coordinate tetrodotoxin. Glu-704 contributes to the saxitoxin binding site. The Extracellular segment spans residues 708-719; that stretch reads DCMLVGDWSCIP. Cys-709 and Cys-717 are oxidised to a cystine. A helical transmembrane segment spans residues 720-740; that stretch reads FFVAVFFVGNLVILNLLIALL. Over 741 to 857 the chain is Cytoplasmic; it reads LNNYGSFCTS…VCFLLAKNKY (117 aa). The chain crosses the membrane as a helical span at residues 858–875; sequence FQKFVTAVLVITSVLLAL. The Extracellular segment spans residues 876 to 888; sequence EDIYLPQRPVLVN. A helical membrane pass occupies residues 889–907; the sequence is ITLYVDYVLTAFFVIEMII. At 908–921 the chain is on the cytoplasmic side; that stretch reads MLFAVGFKKYFTSK. A helical membrane pass occupies residues 922-940; the sequence is WYWLDFIVVVAYLLNFVLM. The Extracellular portion of the chain corresponds to 941–945; that stretch reads CAGIE. The helical transmembrane segment at 946-964 threads the bilayer; that stretch reads ALQTLRLLRVFRLFRPLSK. Residues 965–981 are Cytoplasmic-facing; that stretch reads VNGMQVVTSTLVEAVPH. The chain crosses the membrane as a helical span at residues 982-1001; sequence IFNVILVGIFFWLVFAIMGV. Residues 1002 to 1047 are Extracellular-facing; that stretch reads QLFAGKFYKCVDENSTVLSHEITMDRNDCLHENYTWENSPMNFDHV. Cys-1011 and Cys-1030 are disulfide-bonded. N-linked (GlcNAc...) asparagine glycosylation occurs at Asn-1015. Asn-1028 is a glycosylation site (N-linked (GlcNAc...) asparagine; atypical). Asn-1034 carries N-linked (GlcNAc...) asparagine glycosylation. The pore-forming intramembrane region spans 1048 to 1069; sequence GNAYLSLLQVATFKGWLQIMND. A tetrodotoxin-binding site is contributed by Gly-1062. Trp-1063 lines the saxitoxin pocket. At 1070–1086 the chain is on the extracellular side; that stretch reads AIDSREVHKQPIRETNI. Residues 1087–1108 traverse the membrane as a helical segment; it reads YMYLYFIFFIVFGSFFILKLFV. Residues 1109–1171 lie on the Cytoplasmic side of the membrane; sequence CILIDIFRQQ…LMYDISVNRK (63 aa). The segment at 1133-1146 is linker region that may regulate channel inactivation; sequence QLIYRRAVMRTMSA. The chain crosses the membrane as a helical span at residues 1172 to 1189; the sequence is FEYTMMILIILNVAVMAI. At 1190–1200 the chain is on the extracellular side; sequence DHYGQSMEFSE. Residues 1201–1219 form a helical membrane-spanning segment; it reads VLDYLNLIFIIIFFVECVI. Over 1220 to 1231 the chain is Cytoplasmic; that stretch reads KVSGLRHHYFKD. The chain crosses the membrane as a helical span at residues 1232 to 1249; the sequence is PWNIIDFLYVVLAIAGLM. At 1250–1262 the chain is on the extracellular side; that stretch reads LSDVIEKYFISPT. A helical transmembrane segment spans residues 1263–1279; sequence LLRILRILRVGRLLRYF. At 1280–1298 the chain is on the cytoplasmic side; sequence QSARGMRLLLLALRKALRT. The helical transmembrane segment at 1299 to 1316 threads the bilayer; sequence LFNVSFLLFVIMFVYAVF. At 1317–1338 the chain is on the extracellular side; the sequence is GMEFFMHIRDAGAIDDVYNFKT. Positions 1339–1361 form an intramembrane region, pore-forming; it reads FGQSIILLFQLATSAGWDGVYFA. The tetrodotoxin site is built by Gly-1354 and Asp-1356. Asp-1356 is a binding site for saxitoxin. Residues 1362–1387 are Extracellular-facing; the sequence is IANEEDCRAPDHELGYPGNCGSRALG. A disulfide bridge links Cys-1368 with Cys-1381. A helical membrane pass occupies residues 1388-1410; it reads IAYLVSYLIITCLVVINMYAAVI. Residues 1411–1553 lie on the Cytoplasmic side of the membrane; sequence LDYVLEVYED…NAWRKHKQQN (143 aa).

This sequence belongs to the sodium channel (TC 1.A.1.10) family. In terms of tissue distribution, detected in adult nerve cord, muscle, gut and mushroom-shaped accessory glands.

The protein resides in the cell membrane. With respect to regulation, inhibited by the pore blockers saxitoxin and tetrodotoxin. Its function is as follows. Mediates the voltage-dependent sodium ion permeability of excitable membranes. This chain is Sodium channel protein PaFPC1, found in Periplaneta americana (American cockroach).